The following is a 310-amino-acid chain: CRAL-TRIO domain-containing protein YKL091C (310 aa).

A CRAL-TRIO domain is found at 101–274 (ERIKLAKMYP…KYGGTSVLHN (174 aa)).

In Saccharomyces cerevisiae (strain ATCC 204508 / S288c) (Baker's yeast), this protein is CRAL-TRIO domain-containing protein YKL091C.